A 273-amino-acid chain; its full sequence is 4-hydroxy-tetrahydrodipicolinate reductase (273 aa).

Residues 12–17 and E38 each bind NAD(+); that span reads GAGGRM. R39 is an NADP(+) binding site. Residues 102–104 and 126–129 each bind NAD(+); these read GTT and AANF. Residue H159 is the Proton donor/acceptor of the active site. H160 provides a ligand contact to (S)-2,3,4,5-tetrahydrodipicolinate. The active-site Proton donor is the K163. 169 to 170 contacts (S)-2,3,4,5-tetrahydrodipicolinate; it reads GT.

The protein belongs to the DapB family. As to quaternary structure, homotetramer.

Its subcellular location is the cytoplasm. The catalysed reaction is (S)-2,3,4,5-tetrahydrodipicolinate + NAD(+) + H2O = (2S,4S)-4-hydroxy-2,3,4,5-tetrahydrodipicolinate + NADH + H(+). The enzyme catalyses (S)-2,3,4,5-tetrahydrodipicolinate + NADP(+) + H2O = (2S,4S)-4-hydroxy-2,3,4,5-tetrahydrodipicolinate + NADPH + H(+). The protein operates within amino-acid biosynthesis; L-lysine biosynthesis via DAP pathway; (S)-tetrahydrodipicolinate from L-aspartate: step 4/4. In terms of biological role, catalyzes the conversion of 4-hydroxy-tetrahydrodipicolinate (HTPA) to tetrahydrodipicolinate. In Enterobacter sp. (strain 638), this protein is 4-hydroxy-tetrahydrodipicolinate reductase.